Here is a 225-residue protein sequence, read N- to C-terminus: Peroxiredoxin-2E-2, chloroplastic (225 aa).

A chloroplast-targeting transit peptide spans 1–42 (MAAPTAAALSTLSTASVTSGKRFITSSFSLSFSSRPLATGVR). Positions 63-225 (IAVGDKLPDA…SSAEEMLKAL (163 aa)) constitute a Thioredoxin domain. The active-site Cysteine sulfenic acid (-SOH) intermediate is the cysteine 111.

It belongs to the peroxiredoxin family. Prx5 subfamily. In terms of assembly, monomer.

It localises to the plastid. The protein resides in the chloroplast stroma. The enzyme catalyses [glutaredoxin]-dithiol + a hydroperoxide = [glutaredoxin]-disulfide + an alcohol + H2O. Its function is as follows. Thiol-specific peroxidase that catalyzes the reduction of hydrogen peroxide and organic hydroperoxides to water and alcohols, respectively. Plays a role in cell protection against oxidative stress by detoxifying peroxides. May be involved in chloroplast redox homeostasis. The protein is Peroxiredoxin-2E-2, chloroplastic (PRXIIE-2) of Oryza sativa subsp. japonica (Rice).